A 97-amino-acid polypeptide reads, in one-letter code: MALSLEEVRRIAQLARLRLSEEEERTFAGQLSAILDHVRQLEELDVTAVEPMTHALAAGELPALREDAVRASLAPEEATAAAPAREGTAFKVPRIIE.

This sequence belongs to the GatC family. As to quaternary structure, heterotrimer of A, B and C subunits.

The catalysed reaction is L-glutamyl-tRNA(Gln) + L-glutamine + ATP + H2O = L-glutaminyl-tRNA(Gln) + L-glutamate + ADP + phosphate + H(+). It carries out the reaction L-aspartyl-tRNA(Asn) + L-glutamine + ATP + H2O = L-asparaginyl-tRNA(Asn) + L-glutamate + ADP + phosphate + 2 H(+). Functionally, allows the formation of correctly charged Asn-tRNA(Asn) or Gln-tRNA(Gln) through the transamidation of misacylated Asp-tRNA(Asn) or Glu-tRNA(Gln) in organisms which lack either or both of asparaginyl-tRNA or glutaminyl-tRNA synthetases. The reaction takes place in the presence of glutamine and ATP through an activated phospho-Asp-tRNA(Asn) or phospho-Glu-tRNA(Gln). The protein is Aspartyl/glutamyl-tRNA(Asn/Gln) amidotransferase subunit C of Anaeromyxobacter dehalogenans (strain 2CP-C).